Reading from the N-terminus, the 503-residue chain is Probable cytosol aminopeptidase (503 aa).

The Mn(2+) site is built by K274 and D279. The active site involves K286. Positions 297, 356, and 358 each coordinate Mn(2+). The active site involves R360.

The protein belongs to the peptidase M17 family. Mn(2+) is required as a cofactor.

The protein localises to the cytoplasm. It carries out the reaction Release of an N-terminal amino acid, Xaa-|-Yaa-, in which Xaa is preferably Leu, but may be other amino acids including Pro although not Arg or Lys, and Yaa may be Pro. Amino acid amides and methyl esters are also readily hydrolyzed, but rates on arylamides are exceedingly low.. It catalyses the reaction Release of an N-terminal amino acid, preferentially leucine, but not glutamic or aspartic acids.. Presumably involved in the processing and regular turnover of intracellular proteins. Catalyzes the removal of unsubstituted N-terminal amino acids from various peptides. In Burkholderia pseudomallei (strain 1710b), this protein is Probable cytosol aminopeptidase.